A 126-amino-acid chain; its full sequence is Large ribosomal subunit protein bL12 (126 aa).

Belongs to the bacterial ribosomal protein bL12 family. Homodimer. Part of the ribosomal stalk of the 50S ribosomal subunit. Forms a multimeric L10(L12)X complex, where L10 forms an elongated spine to which 2 to 4 L12 dimers bind in a sequential fashion. Binds GTP-bound translation factors.

Functionally, forms part of the ribosomal stalk which helps the ribosome interact with GTP-bound translation factors. Is thus essential for accurate translation. The sequence is that of Large ribosomal subunit protein bL12 from Chlorobaculum parvum (strain DSM 263 / NCIMB 8327) (Chlorobium vibrioforme subsp. thiosulfatophilum).